The chain runs to 60 residues: UPF0434 protein YcaR (60 aa).

Belongs to the UPF0434 family.

The chain is UPF0434 protein YcaR from Escherichia coli O81 (strain ED1a).